Reading from the N-terminus, the 433-residue chain is Cell adhesion molecule 2 (433 aa).

An N-terminal signal peptide occupies residues 1–24; it reads MILQPSALLCLSSLWGVIVQASQG. Residues 25 to 365 are Extracellular-facing; that stretch reads QFPVTQNVTV…ALPGPVATDH (341 aa). The Ig-like V-type domain maps to 27 to 114; it reads PVTQNVTVVE…SLFTMPVKTS (88 aa). N-linked (GlcNAc...) asparagine glycosylation is found at N31, N41, and N51. Intrachain disulfides connect C44-C104, C146-C203, and C248-C296. 2 Ig-like C2-type domains span residues 127 to 217 and 227 to 312; these read PHIS…PQIA and PTVR…YVLI. Residues N287 and N291 are each glycosylated (N-linked (GlcNAc...) asparagine). Residues 366-386 form a helical membrane-spanning segment; that stretch reads ALIGGVVAVVVFVTLCSIILI. Topologically, residues 387–433 are cytoplasmic; that stretch reads GRYLARHKGTYLTNEAKGAEDAPDADTAIINAEGSQVNAEEKKEYFI.

The protein belongs to the nectin family.

It is found in the membrane. In Xenopus tropicalis (Western clawed frog), this protein is Cell adhesion molecule 2 (cadm2).